A 248-amino-acid chain; its full sequence is Triosephosphate isomerase (248 aa).

D-glyceraldehyde 3-phosphate contacts are provided by asparagine 10 and lysine 12. The active-site Electrophile is the histidine 95. Glutamate 165 functions as the Proton acceptor in the catalytic mechanism. Residues glycine 171, leucine 230, and 232–233 (GN) each bind D-glyceraldehyde 3-phosphate.

It belongs to the triosephosphate isomerase family. Homodimer.

The enzyme catalyses D-glyceraldehyde 3-phosphate = dihydroxyacetone phosphate. Its pathway is carbohydrate biosynthesis; gluconeogenesis. The protein operates within carbohydrate degradation; glycolysis; D-glyceraldehyde 3-phosphate from glycerone phosphate: step 1/1. Functionally, catalyzes the interconversion of glyceraldehyde 3-phosphate and dihydroxyacetone phosphate in the glycolytic and gluconeogenic pathways. The chain is Triosephosphate isomerase from Plasmodium falciparum (isolate 3D7).